The following is a 351-amino-acid chain: Spindolin (351 aa).

Positions 1-20 (MNKFYYICIYINILYVCVSG) are cleaved as a signal peptide.

Homodimer; disulfide-linked.

Functionally, this protein is a spindle body protein. The sequence is that of Spindolin from Lepidoptera (butterflies and moths).